Here is a 332-residue protein sequence, read N- to C-terminus: L-lactate dehydrogenase A chain (332 aa).

The residue at position 2 (Ala2) is an N-acetylalanine. Position 5 is an N6-acetyllysine; alternate (Lys5). Residue Lys5 is modified to N6-succinyllysine; alternate. Tyr10 is subject to Phosphotyrosine. The residue at position 14 (Lys14) is an N6-acetyllysine. The residue at position 18 (Thr18) is a Phosphothreonine. 29–57 (GAVGMACAISILMKDLADELALVDVIEDK) is an NAD(+) binding site. Residue Lys57 is modified to N6-acetyllysine; alternate. A Glycyl lysine isopeptide (Lys-Gly) (interchain with G-Cter in SUMO2); alternate cross-link involves residue Lys57. Lys81 carries the N6-acetyllysine modification. Residue Arg99 participates in NAD(+) binding. Arg106 contributes to the substrate binding site. N6-acetyllysine; alternate is present on Lys118. Lys118 bears the N6-succinyllysine; alternate mark. Lys126 is subject to N6-acetyllysine. Position 138 (Asn138) interacts with NAD(+). Residues Asn138 and Arg169 each contribute to the substrate site. The Proton acceptor role is filled by His193. 2 positions are modified to N6-acetyllysine: Lys224 and Lys232. Residue Tyr239 is modified to Phosphotyrosine. Lys243 carries the N6-acetyllysine modification. Residue Thr248 participates in substrate binding. Thr309 bears the Phosphothreonine mark. Ser310 carries the post-translational modification Phosphoserine. The residue at position 318 (Lys318) is an N6-acetyllysine; alternate. An N6-succinyllysine; alternate modification is found at Lys318. Thr322 carries the phosphothreonine modification.

Belongs to the LDH/MDH superfamily. LDH family. As to quaternary structure, homotetramer. Interacts with PTEN upstream reading frame protein MP31. Interacts with folliculin FLCN; the interaction is direct and inhibits enzymatic activity. Post-translationally, ISGylated. In terms of tissue distribution, predominantly expressed in anaerobic tissues such as skeletal muscle and liver.

The protein localises to the cytoplasm. The enzyme catalyses (S)-lactate + NAD(+) = pyruvate + NADH + H(+). The protein operates within fermentation; pyruvate fermentation to lactate; (S)-lactate from pyruvate: step 1/1. With respect to regulation, fermentation of pyruvate to lactate is inhibited when bound to folliculin FLCN, perhaps partly by FLCN preventing binding of cofactor NADH. Interconverts simultaneously and stereospecifically pyruvate and lactate with concomitant interconversion of NADH and NAD(+). This chain is L-lactate dehydrogenase A chain, found in Homo sapiens (Human).